Reading from the N-terminus, the 545-residue chain is Phenylalanine--tRNA ligase beta subunit (545 aa).

Residues 268–343 form the B5 domain; the sequence is FLHKIQNVRE…MSIGYNNLEP (76 aa). Positions 321, 327, 330, and 331 each coordinate Mg(2+).

Belongs to the phenylalanyl-tRNA synthetase beta subunit family. Type 2 subfamily. Tetramer of two alpha and two beta subunits. Requires Mg(2+) as cofactor.

The protein localises to the cytoplasm. The enzyme catalyses tRNA(Phe) + L-phenylalanine + ATP = L-phenylalanyl-tRNA(Phe) + AMP + diphosphate + H(+). This is Phenylalanine--tRNA ligase beta subunit from Saccharolobus islandicus (strain M.16.27) (Sulfolobus islandicus).